We begin with the raw amino-acid sequence, 601 residues long: Elongation factor 4 (601 aa).

The region spanning Asp2–Thr184 is the tr-type G domain. GTP-binding positions include Asp14–Thr19 and Asn131–Asp134.

This sequence belongs to the TRAFAC class translation factor GTPase superfamily. Classic translation factor GTPase family. LepA subfamily.

It localises to the cell inner membrane. It catalyses the reaction GTP + H2O = GDP + phosphate + H(+). Its function is as follows. Required for accurate and efficient protein synthesis under certain stress conditions. May act as a fidelity factor of the translation reaction, by catalyzing a one-codon backward translocation of tRNAs on improperly translocated ribosomes. Back-translocation proceeds from a post-translocation (POST) complex to a pre-translocation (PRE) complex, thus giving elongation factor G a second chance to translocate the tRNAs correctly. Binds to ribosomes in a GTP-dependent manner. The sequence is that of Elongation factor 4 from Polynucleobacter asymbioticus (strain DSM 18221 / CIP 109841 / QLW-P1DMWA-1) (Polynucleobacter necessarius subsp. asymbioticus).